The following is a 389-amino-acid chain: 23S rRNA (uracil(747)-C(5))-methyltransferase RlmC (389 aa).

Positions 12, 20, 23, and 99 each coordinate [4Fe-4S] cluster. Q224, F253, E274, and N321 together coordinate S-adenosyl-L-methionine. Catalysis depends on C348, which acts as the Nucleophile.

The protein belongs to the class I-like SAM-binding methyltransferase superfamily. RNA M5U methyltransferase family. RlmC subfamily.

It carries out the reaction uridine(747) in 23S rRNA + S-adenosyl-L-methionine = 5-methyluridine(747) in 23S rRNA + S-adenosyl-L-homocysteine + H(+). Catalyzes the formation of 5-methyl-uridine at position 747 (m5U747) in 23S rRNA. In Shewanella putrefaciens (strain CN-32 / ATCC BAA-453), this protein is 23S rRNA (uracil(747)-C(5))-methyltransferase RlmC.